Here is a 394-residue protein sequence, read N- to C-terminus: Protein TsgA homolog (394 aa).

A run of 12 helical transmembrane segments spans residues Trp-11–Met-31, Phe-51–Pro-71, Leu-76–Leu-96, Ala-101–Ile-121, Leu-134–Thr-154, Val-160–Thr-180, Ile-206–Ile-226, Gly-246–Leu-266, Ile-274–Gln-294, Met-297–Ile-317, Phe-334–Val-354, and Leu-363–Val-383.

Belongs to the major facilitator superfamily. TsgA family.

It localises to the cell inner membrane. This chain is Protein TsgA homolog, found in Edwardsiella ictaluri (strain 93-146).